A 178-amino-acid polypeptide reads, in one-letter code: Cytidylate kinase 2 (178 aa).

ATP is bound at residue 7–15 (GKSGCGNTT).

Belongs to the cytidylate kinase family. Type 2 subfamily.

It localises to the cytoplasm. It carries out the reaction CMP + ATP = CDP + ADP. The enzyme catalyses dCMP + ATP = dCDP + ADP. The chain is Cytidylate kinase 2 from Borreliella afzelii (strain PKo) (Borrelia afzelii).